The sequence spans 103 residues: uncharacterized protein (103 aa).

The next 2 helical transmembrane spans lie at 42 to 62 and 65 to 85; these read PFPL…VLLA and TGTL…FICA.

The protein resides in the membrane. This is an uncharacterized protein from Saccharomyces cerevisiae (strain ATCC 204508 / S288c) (Baker's yeast).